The chain runs to 502 residues: uncharacterized protein (502 aa).

Composition is skewed to low complexity over residues 1–10 (MQSTTNNNTN), 28–47 (SNRSAYRSASKSASRSNNLS), and 155–171 (NTEDTNDDNSNSQSVNS). 4 disordered regions span residues 1-57 (MQST…VISY), 155-181 (NTEDTNDDNSNSQSVNSRTDSDNLSAR), 212-362 (SLGN…TDKF), and 438-487 (TIDQ…TSNL). Residues 212-230 (SLGNSERNSPDRPSTQGDS) show a composition bias toward polar residues. 2 stretches are compositionally biased toward low complexity: residues 242-290 (RNAS…SSRN) and 309-327 (SNKNSASRNSASRNSTSIK). The span at 339 to 348 (QTNKSKNQRG) shows a compositional bias: polar residues. Low complexity predominate over residues 446–460 (TSDKNNSTKSNTKYN). Polar residues predominate over residues 470 to 487 (SYGTSKRSHNRSSNTSNL).

The protein resides in the virion. This is an uncharacterized protein from Acanthamoeba polyphaga (Amoeba).